The chain runs to 508 residues: Photosystem II CP47 reaction center protein (508 aa).

The next 6 helical transmembrane spans lie at 21-36 (SVHIMHTALVSGWAGS), 101-115 (IVFSGLCFLAAIWHW), 140-156 (GIHLFLSGVACFGFGAF), 203-218 (IAAGTLGILAGLFHLS), 237-252 (VLSSSIAAVFFAAFVV), and 457-472 (SFALLFFFGHIWHGAR).

It belongs to the PsbB/PsbC family. PsbB subfamily. As to quaternary structure, PSII is composed of 1 copy each of membrane proteins PsbA, PsbB, PsbC, PsbD, PsbE, PsbF, PsbH, PsbI, PsbJ, PsbK, PsbL, PsbM, PsbT, PsbX, PsbY, PsbZ, Psb30/Ycf12, at least 3 peripheral proteins of the oxygen-evolving complex and a large number of cofactors. It forms dimeric complexes. It depends on Binds multiple chlorophylls. PSII binds additional chlorophylls, carotenoids and specific lipids. as a cofactor.

The protein resides in the plastid. The protein localises to the chloroplast thylakoid membrane. In terms of biological role, one of the components of the core complex of photosystem II (PSII). It binds chlorophyll and helps catalyze the primary light-induced photochemical processes of PSII. PSII is a light-driven water:plastoquinone oxidoreductase, using light energy to abstract electrons from H(2)O, generating O(2) and a proton gradient subsequently used for ATP formation. This chain is Photosystem II CP47 reaction center protein, found in Illicium oligandrum (Star anise).